We begin with the raw amino-acid sequence, 346 residues long: FAS-associated factor 2 (346 aa).

K68 is subject to N6-acetyllysine. Positions 176–251 form a coiled coil; that stretch reads SERLEREERN…EEKERKLECL (76 aa). Residues 200–262 form a disordered region; sequence ASLRADQEKE…PEPSPDDPDS (63 aa). The segment covering 204–249 has biased composition (basic and acidic residues); that stretch reads ADQEKERKKREERERKRRKEEEVQQQKLAEERRRQNLQEEKERKLE. In terms of domain architecture, UBX spans 258–340; the sequence is DDPDSVKIIF…GLSHTEVLFV (83 aa).

Identified in a complex that contains SEL1L, OS9, FAF2/UBXD8, UBE2J1/UBC6E and AUP1. Interacts with YOD1. Interacts (via N-terminus) with UBQLN2 (via C-terminus). Interacts with PNPLA2 and UBAC2. Interacts with ZFAND2B; probably through VCP. Interacts with LMBR1L.

It localises to the cytoplasm. It is found in the lipid droplet. The protein localises to the endoplasmic reticulum. Functionally, plays an important role in endoplasmic reticulum-associated degradation (ERAD) that mediates ubiquitin-dependent degradation of misfolded endoplasmic reticulum proteins. By controlling the steady-state expression of the IGF1R receptor, indirectly regulates the insulin-like growth factor receptor signaling pathway. Involved in inhibition of lipid droplet degradation by binding to phospholipase PNPL2 and inhibiting its activity by promoting dissociation of PNPL2 from its endogenous activator, ABHD5 which inhibits the rate of triacylglycerol hydrolysis. Involved in stress granule disassembly: associates with ubiquitinated G3BP1 in response to heat shock, thereby promoting interaction between ubiquitinated G3BP1 and VCP, followed by G3BP1 extraction from stress granules and stress granule disassembly. This chain is FAS-associated factor 2 (Faf2), found in Rattus norvegicus (Rat).